The sequence spans 76 residues: Large ribosomal subunit protein eL20 (76 aa).

Belongs to the eukaryotic ribosomal protein eL20 family. As to quaternary structure, part of the 50S ribosomal subunit. Binds 23S rRNA.

This Methanococcus maripaludis (strain C6 / ATCC BAA-1332) protein is Large ribosomal subunit protein eL20.